We begin with the raw amino-acid sequence, 180 residues long: Large ribosomal subunit protein uL22 (180 aa).

Residues 111–180 (VVVESRPAKD…ETSDAKGGSD (70 aa)) are disordered. Positions 142 to 166 (PAKKAPAKKAPAKKAPAKTAAKKTP) are enriched in basic residues. Positions 171-180 (ETSDAKGGSD) are enriched in basic and acidic residues.

Belongs to the universal ribosomal protein uL22 family. In terms of assembly, part of the 50S ribosomal subunit.

In terms of biological role, this protein binds specifically to 23S rRNA; its binding is stimulated by other ribosomal proteins, e.g. L4, L17, and L20. It is important during the early stages of 50S assembly. It makes multiple contacts with different domains of the 23S rRNA in the assembled 50S subunit and ribosome. The globular domain of the protein is located near the polypeptide exit tunnel on the outside of the subunit, while an extended beta-hairpin is found that lines the wall of the exit tunnel in the center of the 70S ribosome. The protein is Large ribosomal subunit protein uL22 of Mycobacterium avium (strain 104).